The sequence spans 256 residues: Homeobox-leucine zipper protein HOX28 (256 aa).

The interval alanine 56–aspartate 86 is disordered. Low complexity predominate over residues serine 58–serine 67. Residues glycine 91–glutamine 150 constitute a DNA-binding region (homeobox). The segment at lysine 149–proline 193 is leucine-zipper.

The protein belongs to the HD-ZIP homeobox family. Class II subfamily. Expressed in seedlings, roots, stems and panicles.

Its subcellular location is the nucleus. In terms of biological role, probable transcription factor. This Oryza sativa subsp. indica (Rice) protein is Homeobox-leucine zipper protein HOX28 (HOX28).